We begin with the raw amino-acid sequence, 397 residues long: CCA-adding enzyme (397 aa).

Residues Gly-26 and Arg-29 each contribute to the ATP site. Gly-26 and Arg-29 together coordinate CTP. Residues Asp-39 and Asp-41 each coordinate Mg(2+). Positions 110, 153, 156, 159, and 162 each coordinate ATP. Positions 110, 153, 156, 159, and 162 each coordinate CTP.

It belongs to the tRNA nucleotidyltransferase/poly(A) polymerase family. Bacterial CCA-adding enzyme type 3 subfamily. In terms of assembly, homodimer. Mg(2+) is required as a cofactor.

It carries out the reaction a tRNA precursor + 2 CTP + ATP = a tRNA with a 3' CCA end + 3 diphosphate. The catalysed reaction is a tRNA with a 3' CCA end + 2 CTP + ATP = a tRNA with a 3' CCACCA end + 3 diphosphate. Functionally, catalyzes the addition and repair of the essential 3'-terminal CCA sequence in tRNAs without using a nucleic acid template. Adds these three nucleotides in the order of C, C, and A to the tRNA nucleotide-73, using CTP and ATP as substrates and producing inorganic pyrophosphate. tRNA 3'-terminal CCA addition is required both for tRNA processing and repair. Also involved in tRNA surveillance by mediating tandem CCA addition to generate a CCACCA at the 3' terminus of unstable tRNAs. While stable tRNAs receive only 3'-terminal CCA, unstable tRNAs are marked with CCACCA and rapidly degraded. The polypeptide is CCA-adding enzyme (Bacillus cereus (strain G9842)).